Here is a 534-residue protein sequence, read N- to C-terminus: METQNQIETLRYIFNQLNNQDKPQIIWFSGEGEDEKINFLIRLDNYFQPTFVQDLTINFLPAFVKRNKKNPPNTLAKGNFVNIANKLLAVLARSLSWKQLNKPQQKWLLWLLVPFLLLRQLWLKKKVSKIFQFVNERGILSFIKEQWPILTTLVTVGTTLGTPIFSITISQQKAILENAGHGAFVFLVIFSVFAIALGLVSSLIFLVSSLFSIRQKKSLQQLHQILSRLINKYFCFANSEQNQTGRYQLKNTGVCFFYGFDFEEKEYITQAMNLLLLLKQTNCFVLVGCKESNMLLIKNKVEPDINLKQSSLYLDLKSQISPLAQISKYNLLFEELALDADMFYLEDFFALLKTPRQIVNFLFRIKQNLKEFHQPQTLWFDYLALWALVIATDFEFNNVLWSFNDYLSLTNKQKEDYASVNLTAFFNRSLKNHKDNSLLFKPELFNTHAYIPETYTQVTLENIDSDKRAQLVPLNWFSQQKFSDFIEEKINFWQTQQAENKVFYLTLGERIFFLVLVNKKFKQIKLEAALKYLN.

The next 2 helical transmembrane spans lie at 149–169 (ILTTLVTVGTTLGTPIFSITI) and 185–205 (VFLVIFSVFAIALGLVSSLIF).

Its subcellular location is the cell membrane. This is an uncharacterized protein from Mycoplasma pneumoniae (strain ATCC 29342 / M129 / Subtype 1) (Mycoplasmoides pneumoniae).